Consider the following 188-residue polypeptide: Fructose-1-phosphate phosphatase YqaB (188 aa).

D11 (nucleophile) is an active-site residue. Positions 11, 13, and 167 each coordinate Mg(2+). 11 to 13 (DMD) serves as a coordination point for substrate.

It belongs to the HAD-like hydrolase superfamily. CbbY/CbbZ/Gph/YieH family. It depends on Mg(2+) as a cofactor. Mn(2+) is required as a cofactor. The cofactor is Co(2+). Zn(2+) serves as cofactor.

Catalyzes strongly the dephosphorylation of fructose-1-phosphate (Fru1P) and slightly the dephosphorylation of 6-phosphogluconate (6P-Glu). It has low beta-phosphoglucomutase activity. This Escherichia coli (strain K12) protein is Fructose-1-phosphate phosphatase YqaB (yqaB).